The following is a 717-amino-acid chain: Polyribonucleotide nucleotidyltransferase (717 aa).

Aspartate 487 and aspartate 493 together coordinate Mg(2+). One can recognise a KH domain in the interval 554-613 (PRITVINVPKDKIRDVIGTGGKVIREIVEYSGCKIDIEDDGTIKIAATSDEQAQKAIDRI). In terms of domain architecture, S1 motif spans 623-691 (GQIYTGKVVK…DRGKVKLSMR (69 aa)).

Belongs to the polyribonucleotide nucleotidyltransferase family. It depends on Mg(2+) as a cofactor.

It is found in the cytoplasm. It carries out the reaction RNA(n+1) + phosphate = RNA(n) + a ribonucleoside 5'-diphosphate. In terms of biological role, involved in mRNA degradation. Catalyzes the phosphorolysis of single-stranded polyribonucleotides processively in the 3'- to 5'-direction. The polypeptide is Polyribonucleotide nucleotidyltransferase (Acidiphilium cryptum (strain JF-5)).